Here is a 485-residue protein sequence, read N- to C-terminus: Glutamate--tRNA ligase (485 aa).

The 'HIGH' region motif lies at 11-21 (PSPTGYMHVGN). Zn(2+) contacts are provided by Cys-108, Cys-110, Cys-135, and Asp-137. The 'KMSKS' region motif lies at 252 to 256 (KLSKR). Lys-255 is a binding site for ATP.

Belongs to the class-I aminoacyl-tRNA synthetase family. Glutamate--tRNA ligase type 1 subfamily. Monomer. Requires Zn(2+) as cofactor.

Its subcellular location is the cytoplasm. It catalyses the reaction tRNA(Glu) + L-glutamate + ATP = L-glutamyl-tRNA(Glu) + AMP + diphosphate. Functionally, catalyzes the attachment of glutamate to tRNA(Glu) in a two-step reaction: glutamate is first activated by ATP to form Glu-AMP and then transferred to the acceptor end of tRNA(Glu). In Clostridium botulinum (strain Loch Maree / Type A3), this protein is Glutamate--tRNA ligase.